Here is a 308-residue protein sequence, read N- to C-terminus: Methionyl-tRNA formyltransferase (308 aa).

110 to 113 (SLLP) is a (6S)-5,6,7,8-tetrahydrofolate binding site.

It belongs to the Fmt family.

The enzyme catalyses L-methionyl-tRNA(fMet) + (6R)-10-formyltetrahydrofolate = N-formyl-L-methionyl-tRNA(fMet) + (6S)-5,6,7,8-tetrahydrofolate + H(+). Its function is as follows. Attaches a formyl group to the free amino group of methionyl-tRNA(fMet). The formyl group appears to play a dual role in the initiator identity of N-formylmethionyl-tRNA by promoting its recognition by IF2 and preventing the misappropriation of this tRNA by the elongation apparatus. This Neisseria gonorrhoeae (strain NCCP11945) protein is Methionyl-tRNA formyltransferase.